The primary structure comprises 218 residues: UPF0758 protein SAUSA300_1608 (218 aa).

In terms of domain architecture, MPN spans 92–214 (KITQPSDVAD…FTSLVEAGYF (123 aa)). Positions 163, 165, and 176 each coordinate Zn(2+). The short motif at 163–176 (HNHPSGDVTPSQED) is the JAMM motif element.

The protein belongs to the UPF0758 family.

This is UPF0758 protein SAUSA300_1608 from Staphylococcus aureus (strain USA300).